The following is a 67-amino-acid chain: ATP synthase protein 8 (67 aa).

Residues 8–24 (TWSITIMSMIMTLFIVF) traverse the membrane as a helical segment. An N6-acetyllysine; alternate modification is found at Lys-54. Lys-54 is modified (N6-succinyllysine; alternate). N6-acetyllysine is present on Lys-57.

The protein belongs to the ATPase protein 8 family. As to quaternary structure, F-type ATPases have 2 components, CF(1) - the catalytic core - and CF(0) - the membrane proton channel. Component of an ATP synthase complex composed of ATP5PB, ATP5MC1, ATP5F1E, ATP5PD, ATP5ME, ATP5PF, ATP5MF, MT-ATP6, MT-ATP8, ATP5F1A, ATP5F1B, ATP5F1D, ATP5F1C, ATP5PO, ATP5MG, ATP5MK and ATP5MJ. Interacts with PRICKLE3.

It localises to the mitochondrion membrane. In terms of biological role, mitochondrial membrane ATP synthase (F(1)F(0) ATP synthase or Complex V) produces ATP from ADP in the presence of a proton gradient across the membrane which is generated by electron transport complexes of the respiratory chain. F-type ATPases consist of two structural domains, F(1) - containing the extramembraneous catalytic core and F(0) - containing the membrane proton channel, linked together by a central stalk and a peripheral stalk. During catalysis, ATP synthesis in the catalytic domain of F(1) is coupled via a rotary mechanism of the central stalk subunits to proton translocation. Part of the complex F(0) domain. Minor subunit located with subunit a in the membrane. This Felis silvestris lybica (African wildcat) protein is ATP synthase protein 8 (MT-ATP8).